The primary structure comprises 506 residues: CTL-like protein DDB_G0269978 (506 aa).

2 N-linked (GlcNAc...) asparagine glycosylation sites follow: Asn15 and Asn41. The next 12 membrane-spanning stretches (helical) occupy residues 91-111, 126-146, 161-181, 182-202, 226-246, 256-276, 279-299, 323-343, 345-367, 371-393, 416-436, and 447-467; these read LLYS…TVIA, LQGL…FLIW, SFFS…GNGW, YSWA…YFAF, TLLV…IWLF, SYWT…LYWT, VITY…YFFA, FGSI…QFIC, GFAR…ALIF, LYTF…CNSS, ITML…VTMI, and WLYV…DIIF.

The protein belongs to the CTL (choline transporter-like) family.

Its subcellular location is the membrane. The chain is CTL-like protein DDB_G0269978 from Dictyostelium discoideum (Social amoeba).